A 253-amino-acid polypeptide reads, in one-letter code: 2-dehydro-3-deoxy-D-gluconate 5-dehydrogenase (253 aa).

Residue Leu-14–Val-38 participates in NAD(+) binding. Ser-145 lines the substrate pocket. Catalysis depends on Tyr-158, which acts as the Proton acceptor.

Belongs to the short-chain dehydrogenases/reductases (SDR) family.

It catalyses the reaction 2-dehydro-3-deoxy-D-gluconate + NAD(+) = 3-deoxy-D-glycero-2,5-hexodiulosonate + NADH + H(+). It participates in glycan metabolism; pectin degradation; 2-dehydro-3-deoxy-D-gluconate from pectin: step 5/5. Its function is as follows. Catalyzes the reduction of 2,5-diketo-3-deoxygluconate (DKII or 4,6-dihydroxy-2,5-dioxohexanoate) into 2-keto-3-deoxygluconate (KDG or 2-dehydro-3-deoxygluconate) with a concomitant oxidation of NADH. The protein is 2-dehydro-3-deoxy-D-gluconate 5-dehydrogenase (kduD) of Dickeya dadantii (strain 3937) (Erwinia chrysanthemi (strain 3937)).